We begin with the raw amino-acid sequence, 456 residues long: MSSSNNIYHILDDLVKMVIRAFYPDEYAVIIDGLLREKKRIKDEDLALRLRIQQKYVRKILMDLKGDSMVKSSDVKVEAKGPNERGSTHLLWYIDYKHIIDIVKYKLYMFRKKMESVKVQKIDVQTYKCQTCHKVYTALDIPKLLNMDTGALACEICDGELEEELNNESLTQTAKHQSDLFSQLRKIIEQLKKTEGHNIPLFARDLADLSADQGPSYTINTNSSLGMGPKPSAFPVAQGAATSHHIDPTNENIEFHVDILDTDGIEINKAVVKKENKKTGLASLPPWLLPSNSFKNRNVKSNSILNNNQQTQTSTNEQPTAVKEQIKIDQDFYINYIKTHYQEWESAPDSGDADGNGSNSGSGGSTIEGNDGGNGEHQNKKMKLDDSQTVSSMSQSDDDGKDILVRVGDNLIPITKITEHDQELMSNQEYEDYSHALYSYASKNVFDHQYQSLMSN.

The 90-residue stretch at L11–I100 folds into the HTH TFE/IIEalpha-type domain. The segment at C129–C157 adopts a C4-type zinc-finger fold. The disordered stretch occupies residues E345 to D402. A compositionally biased stretch (low complexity) spans A347–G357. Over residues S358–G375 the composition is skewed to gly residues. Residues H377 to D386 are compositionally biased toward basic and acidic residues.

It belongs to the TFIIE alpha subunit family. As to quaternary structure, TFIIE is a tetramer of two alpha and two beta subunits.

It localises to the nucleus. In terms of biological role, recruits TFIIH to the initiation complex and stimulates the RNA polymerase II C-terminal domain kinase and DNA-dependent ATPase activities of TFIIH. Both TFIIH and TFIIE are required for promoter clearance by RNA polymerase. The protein is General transcription factor IIE subunit 1 (gtf2e1-1) of Dictyostelium discoideum (Social amoeba).